The chain runs to 312 residues: uncharacterized protein (312 aa).

Catalysis depends on charge relay system residues S200, D261, and H292.

The protein belongs to the AB hydrolase superfamily. AB hydrolase 2 family.

This is an uncharacterized protein from Acanthamoeba polyphaga mimivirus (APMV).